The sequence spans 256 residues: uncharacterized protein (256 aa).

Residues 7 to 62 (PAERQKTLLNLISKQSVISINNLVNILGVSHMTVRRDIQKLEEDGKVISVSGGVQL) enclose the HTH deoR-type domain. A DNA-binding region (H-T-H motif) is located at residues 24 to 43 (ISINNLVNILGVSHMTVRRD).

This is an uncharacterized protein from Haemophilus influenzae (strain ATCC 51907 / DSM 11121 / KW20 / Rd).